The following is a 146-amino-acid chain: Thyroid hormone-inducible hepatic protein (146 aa).

The segment at 83 to 104 (KVAGSEENGTAETEEVEDESAS) is disordered. Over residues 94-104 (ETEEVEDESAS) the composition is skewed to acidic residues.

This sequence belongs to the SPOT14 family. Homodimer. Heterodimer with MID1IP1. Interacts with THRB and PLAGL1. Mainly expressed in tissues that synthesize triglycerides.

It is found in the nucleus. The protein localises to the cytoplasm. Plays a role in the regulation of lipogenesis, especially in lactating mammary gland. Important for the biosynthesis of triglycerides with medium-length fatty acid chains. May modulate lipogenesis by interacting with MID1IP1 and preventing its interaction with ACACA. May function as transcriptional coactivator. May modulate the transcription factor activity of THRB. The chain is Thyroid hormone-inducible hepatic protein (THRSP) from Homo sapiens (Human).